We begin with the raw amino-acid sequence, 433 residues long: MTRDTSPQLQYLSGFGNEFASEALPGALPVGQNSPQKAPYGLYAELLSGTAFTMTRSELRRTWLYRIRPSALHPRFERLERQPLTGALGAITPNRLRWSPQPMPAEPTDFIEGWLPMVANSASEKPAGVSIYIYRANRSMERVFFNADGELLLVPEQGRLRIATELGVLEVEPLEIAVIPRGMKFRVELLDDQARGYIAENHGAPLRIPDLGPIGSNGLANPRDFLTPVAHYEETSGPVQLVQKFLGEHWACELQHSPLDVVAWHGSNVPYKYDLRRFNTIGTVSFDHPDPSIFTVLTSPTSVHGMANMDFVIFPPRWMVAENTFRPPWFHRNLMNEFMGLIQGAYDAKAEGFLPGGASLHGVMSAHGPDAETCDKAISVDLAPHKIDNTMAFMFETSQVLRPSRQALESPQLQADYDSCWATLPSTFNPNRR.

Residue histidine 288 is the Proton acceptor of the active site. The Fe cation site is built by histidine 331 and glutamate 337. Homogentisate-binding residues include tyrosine 346 and histidine 367. Histidine 367 is a Fe cation binding site.

The protein belongs to the homogentisate dioxygenase family. In terms of assembly, hexamer; dimer of trimers. Fe cation is required as a cofactor.

It catalyses the reaction homogentisate + O2 = 4-maleylacetoacetate + H(+). It participates in amino-acid degradation; L-phenylalanine degradation; acetoacetate and fumarate from L-phenylalanine: step 4/6. Functionally, involved in the catabolism of homogentisate (2,5-dihydroxyphenylacetate or 2,5-OH-PhAc), a central intermediate in the degradation of phenylalanine and tyrosine. Catalyzes the oxidative ring cleavage of the aromatic ring of homogentisate to yield maleylacetoacetate. This is Homogentisate 1,2-dioxygenase from Pseudomonas entomophila (strain L48).